Consider the following 359-residue polypeptide: Leafy/floricaula homolog FL1 (359 aa).

The tract at residues 113-170 is disordered; that stretch reads SEEQVVQHSEKDQLGRAGSGDTAGTSWGAQQQRKKHRHRHHITAMKGAATEEDEEDEE. Positions 144–155 are enriched in basic residues; sequence QRKKHRHRHHIT. 3 DNA-binding regions span residues 179–183, 248–255, and 320–323; these read REHPF, NKPKMRHY, and YVPT. The segment covering 340-352 has biased composition (low complexity); sequence ASSASTSTSAPTA. Residues 340–359 form a disordered region; it reads ASSASTSTSAPTAHHLELPY.

It belongs to the FLO/LFY family. Expressed strongly in the early floral primordium and then successively in the primordia of sepals, petals, stamens and carpels. Also in the leaf primordia and young leaves.

The protein localises to the nucleus. Probable transcription factor. In Eucalyptus globulus (Tasmanian blue gum), this protein is Leafy/floricaula homolog FL1 (LF1).